Here is a 695-residue protein sequence, read N- to C-terminus: Probable rhamnogalacturonate lyase C (695 aa).

Positions 1-21 (MFLPSRKALAFLACLASHSVA) are cleaved as a signal peptide. N-linked (GlcNAc...) asparagine glycans are attached at residues Asn28, Asn96, Asn118, Asn144, Asn199, Asn285, Asn532, and Asn638.

Belongs to the polysaccharide lyase 4 family.

It localises to the secreted. It catalyses the reaction Endotype eliminative cleavage of L-alpha-rhamnopyranosyl-(1-&gt;4)-alpha-D-galactopyranosyluronic acid bonds of rhamnogalacturonan I domains in ramified hairy regions of pectin leaving L-rhamnopyranose at the reducing end and 4-deoxy-4,5-unsaturated D-galactopyranosyluronic acid at the non-reducing end.. Pectinolytic enzymes consist of four classes of enzymes: pectin lyase, polygalacturonase, pectin methylesterase and rhamnogalacturonase. Degrades the rhamnogalacturonan I (RG-I) backbone of pectin. The sequence is that of Probable rhamnogalacturonate lyase C (rglC) from Aspergillus oryzae (strain ATCC 42149 / RIB 40) (Yellow koji mold).